The primary structure comprises 218 residues: Adenylate kinase (218 aa).

11–16 contributes to the ATP binding site; sequence GAGKGT. The NMP stretch occupies residues 31-60; sequence STGDMFREAMANKTKVGLEAKSYIDKGNLV. Residues threonine 32, arginine 37, 58–60, 86–89, and glutamine 93 each bind AMP; these read NLV and GFPR. Residues 127-165 form an LID region; it reads ARYMCKNCGATYNKLSKQPKVEGTCDRCGSHEFYQREDD. Arginine 128 contributes to the ATP binding site. Cysteine 131 and cysteine 134 together coordinate Zn(2+). Residue 137–138 coordinates ATP; that stretch reads TY. Zn(2+) contacts are provided by cysteine 151 and cysteine 154. The AMP site is built by arginine 162 and arginine 173. Residue glutamine 201 coordinates ATP.

It belongs to the adenylate kinase family. In terms of assembly, monomer.

The protein localises to the cytoplasm. It catalyses the reaction AMP + ATP = 2 ADP. The protein operates within purine metabolism; AMP biosynthesis via salvage pathway; AMP from ADP: step 1/1. Functionally, catalyzes the reversible transfer of the terminal phosphate group between ATP and AMP. Plays an important role in cellular energy homeostasis and in adenine nucleotide metabolism. The chain is Adenylate kinase from Lactobacillus helveticus (strain DPC 4571).